Here is a 352-residue protein sequence, read N- to C-terminus: Isopentenyl-diphosphate delta-isomerase (352 aa).

6–7 (RK) lines the substrate pocket. FMN contacts are provided by residues 63–65 (AMT), serine 93, and asparagine 122. Position 93-95 (93-95 (SQR)) interacts with substrate. A substrate-binding site is contributed by glutamine 160. Position 161 (glutamate 161) interacts with Mg(2+). Residues lysine 192, threonine 221, 271-273 (GIR), and 292-293 (SQ) contribute to the FMN site.

The protein belongs to the IPP isomerase type 2 family. Homooctamer. Dimer of tetramers. Requires FMN as cofactor. It depends on NADPH as a cofactor. Mg(2+) is required as a cofactor.

Its subcellular location is the cytoplasm. The catalysed reaction is isopentenyl diphosphate = dimethylallyl diphosphate. Functionally, involved in the biosynthesis of isoprenoids. Catalyzes the 1,3-allylic rearrangement of the homoallylic substrate isopentenyl (IPP) to its allylic isomer, dimethylallyl diphosphate (DMAPP). This is Isopentenyl-diphosphate delta-isomerase from Pyrobaculum arsenaticum (strain DSM 13514 / JCM 11321 / PZ6).